The chain runs to 476 residues: Aspartyl/glutamyl-tRNA(Asn/Gln) amidotransferase subunit B (476 aa).

This sequence belongs to the GatB/GatE family. GatB subfamily. In terms of assembly, heterotrimer of A, B and C subunits.

It catalyses the reaction L-glutamyl-tRNA(Gln) + L-glutamine + ATP + H2O = L-glutaminyl-tRNA(Gln) + L-glutamate + ADP + phosphate + H(+). The enzyme catalyses L-aspartyl-tRNA(Asn) + L-glutamine + ATP + H2O = L-asparaginyl-tRNA(Asn) + L-glutamate + ADP + phosphate + 2 H(+). In terms of biological role, allows the formation of correctly charged Asn-tRNA(Asn) or Gln-tRNA(Gln) through the transamidation of misacylated Asp-tRNA(Asn) or Glu-tRNA(Gln) in organisms which lack either or both of asparaginyl-tRNA or glutaminyl-tRNA synthetases. The reaction takes place in the presence of glutamine and ATP through an activated phospho-Asp-tRNA(Asn) or phospho-Glu-tRNA(Gln). The sequence is that of Aspartyl/glutamyl-tRNA(Asn/Gln) amidotransferase subunit B from Clostridium kluyveri (strain ATCC 8527 / DSM 555 / NBRC 12016 / NCIMB 10680 / K1).